The chain runs to 607 residues: Elongation factor 4 (607 aa).

The 183-residue stretch at 6–188 (SRIRNFSIIA…AIVARIPPPR (183 aa)) folds into the tr-type G domain. Residues 18-23 (DHGKST) and 135-138 (NKID) each bind GTP.

It belongs to the TRAFAC class translation factor GTPase superfamily. Classic translation factor GTPase family. LepA subfamily.

Its subcellular location is the cell inner membrane. It catalyses the reaction GTP + H2O = GDP + phosphate + H(+). Required for accurate and efficient protein synthesis under certain stress conditions. May act as a fidelity factor of the translation reaction, by catalyzing a one-codon backward translocation of tRNAs on improperly translocated ribosomes. Back-translocation proceeds from a post-translocation (POST) complex to a pre-translocation (PRE) complex, thus giving elongation factor G a second chance to translocate the tRNAs correctly. Binds to ribosomes in a GTP-dependent manner. The polypeptide is Elongation factor 4 (Sphingopyxis alaskensis (strain DSM 13593 / LMG 18877 / RB2256) (Sphingomonas alaskensis)).